A 504-amino-acid polypeptide reads, in one-letter code: Arabinose import ATP-binding protein AraG (504 aa).

ABC transporter domains follow at residues 8–243 (LSFR…MVGR) and 256–499 (YGEE…MPKV). 40 to 47 (GENGAGKS) serves as a coordination point for ATP.

This sequence belongs to the ABC transporter superfamily. Arabinose importer (TC 3.A.1.2.2) family. The complex is composed of two ATP-binding proteins (AraG), two transmembrane proteins (AraH) and a solute-binding protein (AraF).

The protein localises to the cell inner membrane. It catalyses the reaction L-arabinose(out) + ATP + H2O = L-arabinose(in) + ADP + phosphate + H(+). Part of the ABC transporter complex AraFGH involved in arabinose import. Responsible for energy coupling to the transport system. The chain is Arabinose import ATP-binding protein AraG from Escherichia coli O6:K15:H31 (strain 536 / UPEC).